A 519-amino-acid polypeptide reads, in one-letter code: 2,3-bisphosphoglycerate-independent phosphoglycerate mutase (519 aa).

Residues Asp-18 and Ser-68 each coordinate Mn(2+). Ser-68 (phosphoserine intermediate) is an active-site residue. Substrate is bound by residues His-129, 159 to 160 (RD), Arg-191, Arg-197, 267 to 270 (RADR), and Lys-341. Asp-408, His-412, Asp-449, His-450, and His-468 together coordinate Mn(2+).

This sequence belongs to the BPG-independent phosphoglycerate mutase family. As to quaternary structure, monomer. Mn(2+) serves as cofactor.

The catalysed reaction is (2R)-2-phosphoglycerate = (2R)-3-phosphoglycerate. Its pathway is carbohydrate degradation; glycolysis; pyruvate from D-glyceraldehyde 3-phosphate: step 3/5. Its function is as follows. Catalyzes the interconversion of 2-phosphoglycerate and 3-phosphoglycerate. This is 2,3-bisphosphoglycerate-independent phosphoglycerate mutase from Coxiella burnetii (strain Dugway 5J108-111).